A 99-amino-acid polypeptide reads, in one-letter code: Integration host factor subunit alpha (99 aa).

Residues 49-75 (FGNFDLRDKNQRPGRNPKTGEDIPITA) are disordered.

This sequence belongs to the bacterial histone-like protein family. As to quaternary structure, heterodimer of an alpha and a beta chain.

Functionally, this protein is one of the two subunits of integration host factor, a specific DNA-binding protein that functions in genetic recombination as well as in transcriptional and translational control. The protein is Integration host factor subunit alpha of Klebsiella pneumoniae (strain 342).